Reading from the N-terminus, the 138-residue chain is Growth factor (138 aa).

The first 19 residues, 1–19 (MSMKYLMLLFAAMIIRSFA), serve as a signal peptide directing secretion. N-linked (GlcNAc...) asparagine; by host glycosylation is present at asparagine 34. Residues 41–81 (AIRLCGPEGDGYCLHGDCIHARDIDGMYCRCSHGYTGIRCQ) enclose the EGF-like domain. 3 disulfide bridges follow: cysteine 45-cysteine 58, cysteine 53-cysteine 69, and cysteine 71-cysteine 80. Residue asparagine 95 is glycosylated (N-linked (GlcNAc...) asparagine; by host).

This sequence belongs to the orthopoxvirus OPG019 family.

The protein localises to the secreted. In terms of biological role, stimulates cellular proliferation (hyperplasia)and mobility around infected cells to promote rapid and efficient spread of infection. This is Growth factor (OPG019) from Rabbitpox virus (strain Utrecht) (RPV).